A 206-amino-acid chain; its full sequence is MSFFTQLCSMDKKYWISLAVLSVTVLISALLKKRATETEDIVVVHYDGEKLNFVLRQPRLNMVSYTSFLRRVCNAFSVMPDKASLKLNGVTLKDGSLSDQNVQNGSELELELPKLSPAMQQIEAYIDELQQDLVPKIEAFCQSSPASAQDVQDLHTRLSETLLARMIKLDAVNVEDDPEARLKRKEAIRLSQQYLSKLDSTKNQNK.

Residues 122–202 (IEAYIDELQQ…QYLSKLDSTK (81 aa)) form the BAG domain. The residue at position 144 (serine 144) is a Phosphoserine.

In terms of assembly, binds to the ATPase domain of HSP70/HSC chaperones.

In terms of biological role, inhibits the chaperone activity of HSP70/HSC70 by promoting substrate release. The chain is BAG family molecular chaperone regulator 1B (bag102) from Schizosaccharomyces pombe (strain 972 / ATCC 24843) (Fission yeast).